A 129-amino-acid chain; its full sequence is NADH-quinone oxidoreductase subunit A (129 aa).

3 consecutive transmembrane segments (helical) span residues 14-34 (LAIH…VAAW), 67-87 (FLIA…FAWA), and 95-115 (WLGL…LVYL).

Belongs to the complex I subunit 3 family. In terms of assembly, NDH-1 is composed of 14 different subunits. Subunits NuoA, H, J, K, L, M, N constitute the membrane sector of the complex.

The protein localises to the cell inner membrane. It carries out the reaction a quinone + NADH + 5 H(+)(in) = a quinol + NAD(+) + 4 H(+)(out). Its function is as follows. NDH-1 shuttles electrons from NADH, via FMN and iron-sulfur (Fe-S) centers, to quinones in the respiratory chain. The immediate electron acceptor for the enzyme in this species is believed to be ubiquinone. Couples the redox reaction to proton translocation (for every two electrons transferred, four hydrogen ions are translocated across the cytoplasmic membrane), and thus conserves the redox energy in a proton gradient. The protein is NADH-quinone oxidoreductase subunit A of Rhodopseudomonas palustris (strain ATCC BAA-98 / CGA009).